The primary structure comprises 368 residues: Zinc finger protein 24 (368 aa).

Residue lysine 22 forms a Glycyl lysine isopeptide (Lys-Gly) (interchain with G-Cter in SUMO2) linkage. A Glycyl lysine isopeptide (Lys-Gly) (interchain with G-Cter in SUMO1); alternate cross-link involves residue lysine 27. Lysine 27 participates in a covalent cross-link: Glycyl lysine isopeptide (Lys-Gly) (interchain with G-Cter in SUMO2); alternate. An SCAN box domain is found at 52–134 (RQRFRQFGYQ…TVLEDLESEL (83 aa)). Phosphoserine is present on residues serine 132 and serine 142. Glycyl lysine isopeptide (Lys-Gly) (interchain with G-Cter in SUMO2) cross-links involve residues lysine 147, lysine 177, and lysine 236. The segment at 251–273 (HICDECGKHFSQGSALILHQRIH) adopts a C2H2-type 1 zinc-finger fold. The segment at 251 to 301 (HICDECGKHFSQGSALILHQRIHSGEKPYGCVECGKAFSRSSILVQHQRVH) is necessary and sufficient for nuclear localization. Position 274 is a phosphoserine (serine 274). Glycyl lysine isopeptide (Lys-Gly) (interchain with G-Cter in SUMO2) cross-links involve residues lysine 277 and lysine 286. 3 consecutive C2H2-type zinc fingers follow at residues 279–301 (YGCV…QRVH), 307–329 (YKCL…QRIH), and 335–357 (YECV…QRRH). Residue serine 292 is modified to Phosphoserine. Tyrosine 335 carries the phosphotyrosine modification. Glycyl lysine isopeptide (Lys-Gly) (interchain with G-Cter in SUMO2) cross-links involve residues lysine 361 and lysine 367.

The protein belongs to the krueppel C2H2-type zinc-finger protein family. Post-translationally, sumoylated.

The protein localises to the nucleus. Its function is as follows. Transcription factor required for myelination of differentiated oligodendrocytes. Required for the conversion of oligodendrocytes from the premyelinating to the myelinating state. In the developing central nervous system (CNS), involved in the maintenance in the progenitor stage by promoting the cell cycle. Specifically binds to the 5'-TCAT-3' DNA sequence. Has transcription repressor activity in vitro. The sequence is that of Zinc finger protein 24 (ZNF24) from Pongo abelii (Sumatran orangutan).